Reading from the N-terminus, the 844-residue chain is Elongation factor 2 (844 aa).

The tr-type G domain occupies 17 to 255 (TNVRNMSVIA…LWGDNYFNPK (239 aa)). Position 26-33 (26-33 (AHVDHGKS)) interacts with GTP. Residues Thr57 and Thr59 each carry the phosphothreonine modification. GTP-binding positions include 160–163 (NKVD) and 215–217 (SGL). His700 is modified (diphthamide).

It belongs to the TRAFAC class translation factor GTPase superfamily. Classic translation factor GTPase family. EF-G/EF-2 subfamily.

The protein resides in the cytoplasm. It catalyses the reaction GTP + H2O = GDP + phosphate + H(+). Functionally, catalyzes the GTP-dependent ribosomal translocation step during translation elongation. During this step, the ribosome changes from the pre-translocational (PRE) to the post-translocational (POST) state as the newly formed A-site-bound peptidyl-tRNA and P-site-bound deacylated tRNA move to the P and E sites, respectively. Catalyzes the coordinated movement of the two tRNA molecules, the mRNA and conformational changes in the ribosome. This is Elongation factor 2 (cot-3) from Neurospora crassa (strain ATCC 24698 / 74-OR23-1A / CBS 708.71 / DSM 1257 / FGSC 987).